A 38-amino-acid chain; its full sequence is AVTDNEIVPQCLANGSKCYSHDVCCTKRCHNYAKKCVT.

Intrachain disulfides connect Cys11-Cys25, Cys18-Cys29, and Cys24-Cys36. Tyr32 bears the 3',4'-dihydroxyphenylalanine mark.

As to quaternary structure, monomer. Post-translationally, contains L-DOPA (3',4'-dihydroxyphenylalanine).

Its subcellular location is the secreted. Its function is as follows. Potent reversible, competitive inhibitor of tyrosinase (phenol oxidase) in the nanomolar range. The sequence is that of Tyrosinase inhibitor from Musca domestica (House fly).